The following is a 475-amino-acid chain: Aspartyl/glutamyl-tRNA(Asn/Gln) amidotransferase subunit B (475 aa).

It belongs to the GatB/GatE family. GatB subfamily. Heterotrimer of A, B and C subunits.

It catalyses the reaction L-glutamyl-tRNA(Gln) + L-glutamine + ATP + H2O = L-glutaminyl-tRNA(Gln) + L-glutamate + ADP + phosphate + H(+). The enzyme catalyses L-aspartyl-tRNA(Asn) + L-glutamine + ATP + H2O = L-asparaginyl-tRNA(Asn) + L-glutamate + ADP + phosphate + 2 H(+). Its function is as follows. Allows the formation of correctly charged Asn-tRNA(Asn) or Gln-tRNA(Gln) through the transamidation of misacylated Asp-tRNA(Asn) or Glu-tRNA(Gln) in organisms which lack either or both of asparaginyl-tRNA or glutaminyl-tRNA synthetases. The reaction takes place in the presence of glutamine and ATP through an activated phospho-Asp-tRNA(Asn) or phospho-Glu-tRNA(Gln). The sequence is that of Aspartyl/glutamyl-tRNA(Asn/Gln) amidotransferase subunit B from Thermoanaerobacter pseudethanolicus (strain ATCC 33223 / 39E) (Clostridium thermohydrosulfuricum).